The primary structure comprises 471 residues: tRNA-2-methylthio-N(6)-dimethylallyladenosine synthase (471 aa).

Residues L31–N149 enclose the MTTase N-terminal domain. Residues C40, C76, C110, C186, C190, and C193 each contribute to the [4Fe-4S] cluster site. The Radical SAM core domain maps to R172–E402. Residues A405–E468 form the TRAM domain.

This sequence belongs to the methylthiotransferase family. MiaB subfamily. Monomer. It depends on [4Fe-4S] cluster as a cofactor.

Its subcellular location is the cytoplasm. It carries out the reaction N(6)-dimethylallyladenosine(37) in tRNA + (sulfur carrier)-SH + AH2 + 2 S-adenosyl-L-methionine = 2-methylsulfanyl-N(6)-dimethylallyladenosine(37) in tRNA + (sulfur carrier)-H + 5'-deoxyadenosine + L-methionine + A + S-adenosyl-L-homocysteine + 2 H(+). Its function is as follows. Catalyzes the methylthiolation of N6-(dimethylallyl)adenosine (i(6)A), leading to the formation of 2-methylthio-N6-(dimethylallyl)adenosine (ms(2)i(6)A) at position 37 in tRNAs that read codons beginning with uridine. In Thermoanaerobacter sp. (strain X514), this protein is tRNA-2-methylthio-N(6)-dimethylallyladenosine synthase.